Consider the following 485-residue polypeptide: KTTNTFASVNDDEKPREECGVVGIYGDPEASRLCSLALHALQHRGQEGAGIVAVHDNLFHQVNGVGLVSDVFNEAKLSELPGSCAIGHVRYSTAGHSKLVNVQPFVAGYRFGSVAVAHNGNFVNYRSLRAKLEDNGSIFNTTSDTEVVLHLIATSKHRPFLLRVVDACENLKGAYSLVFLTEDKLVAVRDFGFRPLVMGRRKNGAVVFASETCALDLIDATYEREVNPGEVVVVDHTGIQSLCLVTHQEPKQCIFEHIYFALPNSVVFGRSVYESRRKFGEILATESPVECDVVIAVPDSGVVAALGYAAKAGVPFQQGLIRSHHVGRTFIEPSQKIRDFGVKLKLFPVRGVLEGKRVVVVDDSIVRGTTSSKIVRLIKEAGAKEVHMRIACPPIVASCYYGVDTPSKEELISNRMDVEEIRKFIGSDSLAFLPLDTLKSLLEDDAPNYCYACFSGKYPVQPENLNPTASMSLTGTMFQWQFETY.

Residues 1 to 18 (KTTNTFASVNDDEKPREE) constitute a chloroplast transit peptide. Catalysis depends on cysteine 19, which acts as the Nucleophile. A Glutamine amidotransferase type-2 domain is found at 19-237 (CGVVGIYGDP…PGEVVVVDHT (219 aa)). Cysteine 253 lines the [4Fe-4S] cluster pocket. 3 residues coordinate Mg(2+): serine 300, aspartate 362, and aspartate 363. Cysteine 399, cysteine 450, and cysteine 453 together coordinate [4Fe-4S] cluster.

This sequence in the C-terminal section; belongs to the purine/pyrimidine phosphoribosyltransferase family. Requires Mg(2+) as cofactor. [4Fe-4S] cluster is required as a cofactor.

It localises to the plastid. Its subcellular location is the chloroplast. It catalyses the reaction 5-phospho-beta-D-ribosylamine + L-glutamate + diphosphate = 5-phospho-alpha-D-ribose 1-diphosphate + L-glutamine + H2O. It participates in purine metabolism; IMP biosynthesis via de novo pathway; N(1)-(5-phospho-D-ribosyl)glycinamide from 5-phospho-alpha-D-ribose 1-diphosphate: step 1/2. The sequence is that of Amidophosphoribosyltransferase, chloroplastic (PUR1) from Vigna aconitifolia (Moth bean).